We begin with the raw amino-acid sequence, 317 residues long: MAKADKKKYSGATTNKQVAAEKHLTSVFKFNTDLGQHILKNPLVAQGIVDKAQIKPSDIVLEVGPGTGNLTVRILEQARKVVAVEMDPRMAAELTKRVHGTPAEKKLEIMLGDFMKTELPYFDICISNTPYQISSPLVFKLINQPRPPRVSILMFQREFAMRLLARPGDSLYCRLSANVQMWANVTHIMKVGRNNFRPPPQVESSVVRIEIKNPRPQIDFNEWDGLLRIVFVRKNRTISAGFKSTTVLEILEKNYKTFLAINNQSIDETENLQSLIKQKIETVLKETGLAEKRAGKCDQTDFLKLLYAFHQVGIHFS.

Histidine 37, leucine 39, glycine 64, glutamate 85, aspartate 113, and asparagine 128 together coordinate S-adenosyl-L-methionine.

The protein belongs to the class I-like SAM-binding methyltransferase superfamily. rRNA adenine N(6)-methyltransferase family.

The catalysed reaction is adenosine(1779)/adenosine(1780) in 18S rRNA + 4 S-adenosyl-L-methionine = N(6)-dimethyladenosine(1779)/N(6)-dimethyladenosine(1780) in 18S rRNA + 4 S-adenosyl-L-homocysteine + 4 H(+). Its function is as follows. Specifically dimethylates two adjacent adenosines in the loop of a conserved hairpin near the 3'-end of 18S rRNA in the 40S particle. The chain is Dimethyladenosine transferase (DIM1) from Candida glabrata (strain ATCC 2001 / BCRC 20586 / JCM 3761 / NBRC 0622 / NRRL Y-65 / CBS 138) (Yeast).